The following is a 546-amino-acid chain: Chaperonin GroEL (546 aa).

ATP-binding positions include 30 to 33 (TLGP), K51, 87 to 91 (DGTTT), G415, 479 to 481 (NAA), and D495. The disordered stretch occupies residues 526-546 (KEEKPDLSGAGAGMGGMGGMM). Gly residues predominate over residues 535–546 (AGAGMGGMGGMM).

The protein belongs to the chaperonin (HSP60) family. In terms of assembly, forms a cylinder of 14 subunits composed of two heptameric rings stacked back-to-back. Interacts with the co-chaperonin GroES.

Its subcellular location is the cytoplasm. The catalysed reaction is ATP + H2O + a folded polypeptide = ADP + phosphate + an unfolded polypeptide.. Its function is as follows. Together with its co-chaperonin GroES, plays an essential role in assisting protein folding. The GroEL-GroES system forms a nano-cage that allows encapsulation of the non-native substrate proteins and provides a physical environment optimized to promote and accelerate protein folding. This is Chaperonin GroEL from Wigglesworthia glossinidia brevipalpis.